We begin with the raw amino-acid sequence, 873 residues long: DNA mismatch repair protein MutS (873 aa).

625-632 (GPNMGGKS) serves as a coordination point for ATP.

This sequence belongs to the DNA mismatch repair MutS family.

This protein is involved in the repair of mismatches in DNA. It is possible that it carries out the mismatch recognition step. This protein has a weak ATPase activity. In Xanthomonas campestris pv. campestris (strain 8004), this protein is DNA mismatch repair protein MutS.